The following is a 387-amino-acid chain: Xylose isomerase (387 aa).

Active-site residues include His-53 and Asp-56. 7 residues coordinate Mg(2+): Glu-180, Glu-216, His-219, Asp-244, Asp-254, Asp-256, and Asp-286.

The protein belongs to the xylose isomerase family. As to quaternary structure, homotetramer. The cofactor is Mg(2+).

The protein localises to the cytoplasm. It carries out the reaction alpha-D-xylose = alpha-D-xylulofuranose. This chain is Xylose isomerase (xylA), found in Thermus caldophilus.